The chain runs to 336 residues: HTH-type transcriptional repressor PurR (336 aa).

Residues 2–56 (ATIKDVAKMAGVSTTTVSHVINKTRFVAKDTEEAVLSAIKQLNYSPSAVARSLKV) enclose the HTH lacI-type domain. The segment at residues 4–23 (IKDVAKMAGVSTTTVSHVIN) is a DNA-binding region (H-T-H motif). A DNA-binding region spans residues 48–56 (SAVARSLKV). Positions 73, 188, 190, 219, and 273 each coordinate hypoxanthine.

Homodimer.

It functions in the pathway purine metabolism; purine nucleotide biosynthesis [regulation]. Is the main repressor of the genes involved in the de novo synthesis of purine nucleotides, regulating purB, purC, purEK, purF, purHD, purL, purMN and guaBA expression. PurR is allosterically activated to bind its cognate DNA by binding the purine corepressors, hypoxanthine or guanine, thereby effecting transcription repression. The sequence is that of HTH-type transcriptional repressor PurR from Haemophilus influenzae (strain PittGG).